A 426-amino-acid polypeptide reads, in one-letter code: Enolase (426 aa).

Q165 lines the (2R)-2-phosphoglycerate pocket. E209 acts as the Proton donor in catalysis. Residues D244, E287, and D313 each coordinate Mg(2+). 4 residues coordinate (2R)-2-phosphoglycerate: K338, R367, S368, and K389. K338 acts as the Proton acceptor in catalysis.

Belongs to the enolase family. Requires Mg(2+) as cofactor.

The protein resides in the cytoplasm. It is found in the secreted. Its subcellular location is the cell surface. It catalyses the reaction (2R)-2-phosphoglycerate = phosphoenolpyruvate + H2O. The protein operates within carbohydrate degradation; glycolysis; pyruvate from D-glyceraldehyde 3-phosphate: step 4/5. In terms of biological role, catalyzes the reversible conversion of 2-phosphoglycerate (2-PG) into phosphoenolpyruvate (PEP). It is essential for the degradation of carbohydrates via glycolysis. The sequence is that of Enolase from Methanococcus vannielii (strain ATCC 35089 / DSM 1224 / JCM 13029 / OCM 148 / SB).